A 487-amino-acid polypeptide reads, in one-letter code: Protein nucleotidyltransferase YdiU (487 aa).

Residues G85, G87, R88, K108, D120, G121, R171, and R178 each coordinate ATP. Residue D247 is the Proton acceptor of the active site. Mg(2+) contacts are provided by N248 and D257. D257 provides a ligand contact to ATP.

Belongs to the SELO family. It depends on Mg(2+) as a cofactor. The cofactor is Mn(2+).

It carries out the reaction L-seryl-[protein] + ATP = 3-O-(5'-adenylyl)-L-seryl-[protein] + diphosphate. The catalysed reaction is L-threonyl-[protein] + ATP = 3-O-(5'-adenylyl)-L-threonyl-[protein] + diphosphate. It catalyses the reaction L-tyrosyl-[protein] + ATP = O-(5'-adenylyl)-L-tyrosyl-[protein] + diphosphate. The enzyme catalyses L-histidyl-[protein] + UTP = N(tele)-(5'-uridylyl)-L-histidyl-[protein] + diphosphate. It carries out the reaction L-seryl-[protein] + UTP = O-(5'-uridylyl)-L-seryl-[protein] + diphosphate. The catalysed reaction is L-tyrosyl-[protein] + UTP = O-(5'-uridylyl)-L-tyrosyl-[protein] + diphosphate. Nucleotidyltransferase involved in the post-translational modification of proteins. It can catalyze the addition of adenosine monophosphate (AMP) or uridine monophosphate (UMP) to a protein, resulting in modifications known as AMPylation and UMPylation. In Agrobacterium fabrum (strain C58 / ATCC 33970) (Agrobacterium tumefaciens (strain C58)), this protein is Protein nucleotidyltransferase YdiU.